The primary structure comprises 35 residues: Tamulustoxin-2 (35 aa).

3 disulfide bridges follow: Cys-2–Cys-22, Cys-7–Cys-31, and Cys-11–Cys-33.

The protein belongs to the short scorpion toxin superfamily. Potassium channel inhibitor family. As to expression, expressed by the venom gland.

It localises to the secreted. In terms of biological role, blocks Kv1.6/KCNA6 potassium channels. This Hottentotta tamulus (Eastern Indian scorpion) protein is Tamulustoxin-2.